Consider the following 258-residue polypeptide: Oxidoreductase fscI (258 aa).

Positions 34, 59, 82, 109, and 141 each coordinate NADP(+). Ser-163 serves as the catalytic Proton donor. NADP(+) is bound at residue Arg-193.

This sequence belongs to the short-chain dehydrogenases/reductases (SDR) family.

The protein operates within secondary metabolite biosynthesis. Functionally, oxidoreductase; part of the fragmented gene cluster that mediates the biosynthesis of fusarochromene, a tryptophan-derived metabolite closely related to a group of mycotoxins including fusarochromanone. Within the pathway, fscI catalyzes the formation of the chromene ring from the prenyl moity added by the prenyltransferase fscG. The first step of the pathway is the epimerization of L-tryptophan to D-tryptophan in the presence of the NRPS-like tryptophan epimerase fscC. D-tryptophan is subsequently hydroxylated by the tryptophan 6-hydroxylase fscE to yield 6-hydroxytryptophan. The pyrrole ring undergoes cleavaged by the tryptophan 2,3-dioxygenase fscD and is finally converted to 4-hydroxykyrunenine by the hydrolase fscH. The NRPS-like oxidoreductase fscA reduces the carboxyl group to primary alcohol and the DMATS-type prenyltransferase fscG performs prenylation, followed by the formation of a chromene ring catalyzed by the oxidoreductase fscI, which leads to desacetylfusarochromene. Epoxidation by fscF and rearrangement reactions of chromene double bonds convert compound desacetylfusarochromene to fusarochromanones. Although specific acetyltransferases were not found near the fsc gene cluster, several predicted enzymes containing the N-acetyltransferase superfamily domain are present in the genome of F.equiseti. These predicted enzymes may have the potential to convert desacetylfusarochromene to fusarochromene. This is Oxidoreductase fscI from Fusarium equiseti (Fusarium scirpi).